Here is a 397-residue protein sequence, read N- to C-terminus: L-aspartate--L-methionine ligase (397 aa).

An ATP-grasp domain is found at 131-347 (VALNNKARIP…FFNTILKYVK (217 aa)). ADP-binding residues include K136, V171, K173, G183, V186, I188, E215, Q216, I218, N223, and T246. A Mg(2+)-binding site is contributed by D288. ADP-binding residues include L290 and I300. D301 serves as a coordination point for Mg(2+). R305 acts as the Critical for catalysis in catalysis.

Primarily a monomer in solution. Minor homodimer formation. It depends on Mg(2+) as a cofactor.

The enzyme catalyses L-aspartate + L-methionine + ATP = L-aspartyl-L-methionine + ADP + phosphate + H(+). The protein operates within amino-acid metabolism. Functionally, L-amino acid ligase, which preferentially catalyzes the formation of L-aspartyl-L-methionine dipeptide from L-aspartate and L-methionine in the presence of ATP. Less active with L-asparagine and L-methionine as substrates. Less active with L-aspartate and either L-phenylalanine, L-valine, L-leucine or L-isoleucine as substrates. Decreased activity when L-methionine is substituted with seleno-DL-methionine, L-homocysteine, L-methionine sulfoxide, L-methionine sulfoximine and o-acetyl-L-serine. Decreased activity with acetylation of L-methionine amino group. Decreased activity by modification of L-methionine carboxylate to L-methionine methyl ester. No activity when L-methionine is substituted with L-homoserine. No activity with formylation of L-methionine amino group. No activity by modification of L-methionine carboxylate to L-methionine-glycine carboxylate. No activity when L-aspartate substrate is replaced by analogs such as L-homoserine, DL-aspartate beta-methyl ester, L-glutamate or o-acetyl-L-serine. No activity when L-aspartate amino and alpha-carboxylate groups are modified to L-malate, glycine-L-aspartate, L-aspartate-glycine or N-carbamoyl-DL-aspartate. No activity with L-methionine or L-aspartate as sole substrates. No activity in presence of other nucleoside triphosphates including GTP, CTP, UTP, TTP or ITP. Involved in sulfur amino acid metabolism. This is L-aspartate--L-methionine ligase from Staphylococcus aureus (strain NCTC 8325 / PS 47).